Consider the following 316-residue polypeptide: BTB/POZ domain-containing adapter for CUL3-mediated RhoA degradation protein 2 (316 aa).

Residues lysine 28–glutamine 96 enclose the BTB domain. Positions glutamate 268 to proline 279 are enriched in polar residues. The disordered stretch occupies residues glutamate 268–glutamate 287. Serine 278 is subject to Phosphoserine. Serine 280 carries the phosphoserine; by CK2 modification.

The protein belongs to the BACURD family. Component of the BCR(TNFAIP1) E3 ubiquitin ligase complex, at least composed of CUL3, TNFAIP1/BACURD2 and RBX1. Interacts with RHOA; with a preference for RhoA-GDP. Interacts with RHOB. Interacts with PCNA. Interacts with CSNK2B. Post-translationally, phosphorylation at Ser-280 by CK2 facilitates the nucleus localization and increases interaction with PCNA.

The protein resides in the cytoplasm. It localises to the nucleus. It is found in the endosome. Its pathway is protein modification; protein ubiquitination. Its function is as follows. Substrate-specific adapter of a BCR (BTB-CUL3-RBX1) E3 ubiquitin-protein ligase complex involved in regulation of cytoskeleton structure. The BCR(TNFAIP1) E3 ubiquitin ligase complex mediates the ubiquitination of RHOA, leading to its degradation by the proteasome, thereby regulating the actin cytoskeleton and cell migration. Its interaction with RHOB may regulate apoptosis. May enhance the PCNA-dependent DNA polymerase delta activity. This chain is BTB/POZ domain-containing adapter for CUL3-mediated RhoA degradation protein 2 (TNFAIP1), found in Homo sapiens (Human).